The chain runs to 369 residues: Maltose/maltodextrin import ATP-binding protein MalK (369 aa).

In terms of domain architecture, ABC transporter spans 4-234; it reads VTLRNVCKAY…PQNRFVAGFI (231 aa). 36-43 contributes to the ATP binding site; the sequence is GPSGCGKS.

The protein belongs to the ABC transporter superfamily. Maltooligosaccharide importer (TC 3.A.1.1.1) family. As to quaternary structure, the complex is composed of two ATP-binding proteins (MalK), two transmembrane proteins (MalG and MalK) and a solute-binding protein (MalE).

It is found in the cell inner membrane. The enzyme catalyses D-maltose(out) + ATP + H2O = D-maltose(in) + ADP + phosphate + H(+). In terms of biological role, part of the ABC transporter complex MalEFGK involved in maltose/maltodextrin import. Responsible for energy coupling to the transport system. The sequence is that of Maltose/maltodextrin import ATP-binding protein MalK from Photobacterium profundum (strain SS9).